Consider the following 264-residue polypeptide: 3-methyl-2-oxobutanoate hydroxymethyltransferase (264 aa).

Mg(2+)-binding residues include Asp-45 and Asp-84. 3-methyl-2-oxobutanoate contacts are provided by residues 45 to 46, Asp-84, and Lys-112; that span reads DS. Glu-114 provides a ligand contact to Mg(2+). Glu-181 serves as the catalytic Proton acceptor.

Belongs to the PanB family. As to quaternary structure, homodecamer; pentamer of dimers. The cofactor is Mg(2+).

Its subcellular location is the cytoplasm. The enzyme catalyses 3-methyl-2-oxobutanoate + (6R)-5,10-methylene-5,6,7,8-tetrahydrofolate + H2O = 2-dehydropantoate + (6S)-5,6,7,8-tetrahydrofolate. It functions in the pathway cofactor biosynthesis; (R)-pantothenate biosynthesis; (R)-pantoate from 3-methyl-2-oxobutanoate: step 1/2. Functionally, catalyzes the reversible reaction in which hydroxymethyl group from 5,10-methylenetetrahydrofolate is transferred onto alpha-ketoisovalerate to form ketopantoate. The protein is 3-methyl-2-oxobutanoate hydroxymethyltransferase of Escherichia coli O17:K52:H18 (strain UMN026 / ExPEC).